The primary structure comprises 152 residues: Cytosolic calcium-binding protein 1 (152 aa).

A run of 7 repeats spans residues 57 to 62 (VEETEK), 67 to 71 (TEEAQ), 78 to 82 (VEIKK), 104 to 108 (VEAKK), 112 to 116 (VEEKK), 124 to 129 (VEEEKK), and 131 to 136 (EAEEEK). Positions 57–136 (VEETEKPIEE…EKKPEAEEEK (80 aa)) are 7 X 5 AA approximate repeats of V-E-E-K-K. The segment at 60 to 152 (TEKPIEETEE…VTAPVEKADE (93 aa)) is disordered. Residues 96 to 138 (DESKTEEVVEAKKEEEVEEKKTEEAPVVVEEEKKPEAEEEKPA) are compositionally biased toward basic and acidic residues.

In terms of tissue distribution, predominantly expressed in petioles (at protein level). Mainly observed in shoots, flowers, siliques and roots, and, to a lower extent, in stems and leaves.

The protein localises to the cytoplasm. The protein resides in the cytosol. Functionally, binds calcium Ca(2+) and may act as a signal mediator to buffer Ca(2+). The polypeptide is Cytosolic calcium-binding protein 1 (Arabidopsis thaliana (Mouse-ear cress)).